The primary structure comprises 420 residues: Exodeoxyribonuclease 7 large subunit (420 aa).

The protein belongs to the XseA family. Heterooligomer composed of large and small subunits.

It localises to the cytoplasm. It catalyses the reaction Exonucleolytic cleavage in either 5'- to 3'- or 3'- to 5'-direction to yield nucleoside 5'-phosphates.. In terms of biological role, bidirectionally degrades single-stranded DNA into large acid-insoluble oligonucleotides, which are then degraded further into small acid-soluble oligonucleotides. This is Exodeoxyribonuclease 7 large subunit from Helicobacter acinonychis (strain Sheeba).